A 208-amino-acid polypeptide reads, in one-letter code: Uracil phosphoribosyltransferase (208 aa).

5-phospho-alpha-D-ribose 1-diphosphate contacts are provided by residues Arg-77, Arg-102, and 128 to 136 (DPMLATGGT). Uracil-binding positions include Ile-191 and 196–198 (GDI). Asp-197 is a 5-phospho-alpha-D-ribose 1-diphosphate binding site.

This sequence belongs to the UPRTase family. Requires Mg(2+) as cofactor.

The catalysed reaction is UMP + diphosphate = 5-phospho-alpha-D-ribose 1-diphosphate + uracil. It functions in the pathway pyrimidine metabolism; UMP biosynthesis via salvage pathway; UMP from uracil: step 1/1. With respect to regulation, allosterically activated by GTP. Functionally, catalyzes the conversion of uracil and 5-phospho-alpha-D-ribose 1-diphosphate (PRPP) to UMP and diphosphate. The protein is Uracil phosphoribosyltransferase of Aquifex aeolicus (strain VF5).